Consider the following 208-residue polypeptide: ATP-dependent Clp protease proteolytic subunit (208 aa).

Serine 107 acts as the Nucleophile in catalysis. Residue histidine 132 is part of the active site.

This sequence belongs to the peptidase S14 family. As to quaternary structure, fourteen ClpP subunits assemble into 2 heptameric rings which stack back to back to give a disk-like structure with a central cavity, resembling the structure of eukaryotic proteasomes.

It is found in the cytoplasm. It carries out the reaction Hydrolysis of proteins to small peptides in the presence of ATP and magnesium. alpha-casein is the usual test substrate. In the absence of ATP, only oligopeptides shorter than five residues are hydrolyzed (such as succinyl-Leu-Tyr-|-NHMec, and Leu-Tyr-Leu-|-Tyr-Trp, in which cleavage of the -Tyr-|-Leu- and -Tyr-|-Trp bonds also occurs).. In terms of biological role, cleaves peptides in various proteins in a process that requires ATP hydrolysis. Has a chymotrypsin-like activity. Plays a major role in the degradation of misfolded proteins. This chain is ATP-dependent Clp protease proteolytic subunit, found in Methylorubrum populi (strain ATCC BAA-705 / NCIMB 13946 / BJ001) (Methylobacterium populi).